The sequence spans 393 residues: Transcription factor bHLH112 (393 aa).

Disordered stretches follow at residues 248–277 (TRAQSESLKRAKDNESAAKKPRVTTPSPLP) and 332–356 (KQGASNQQQQQISGKSKSQDENENH). Residues 254 to 265 (SLKRAKDNESAA) show a composition bias toward basic and acidic residues. The bHLH domain maps to 270 to 319 (VTTPSPLPTFKVRKENLRDQITSLQQLVSPFGKTDTASVLQEAIEYIKFL). Over residues 332–347 (KQGASNQQQQQISGKS) the composition is skewed to low complexity.

As to quaternary structure, homodimer.

Its subcellular location is the nucleus. The polypeptide is Transcription factor bHLH112 (BHLH112) (Arabidopsis thaliana (Mouse-ear cress)).